Consider the following 865-residue polypeptide: Alanine--tRNA ligase (865 aa).

Residues H554, H558, C656, and H660 each contribute to the Zn(2+) site.

The protein belongs to the class-II aminoacyl-tRNA synthetase family. Requires Zn(2+) as cofactor.

Its subcellular location is the cytoplasm. The catalysed reaction is tRNA(Ala) + L-alanine + ATP = L-alanyl-tRNA(Ala) + AMP + diphosphate. Functionally, catalyzes the attachment of alanine to tRNA(Ala) in a two-step reaction: alanine is first activated by ATP to form Ala-AMP and then transferred to the acceptor end of tRNA(Ala). Also edits incorrectly charged Ser-tRNA(Ala) and Gly-tRNA(Ala) via its editing domain. This Francisella tularensis subsp. tularensis (strain WY96-3418) protein is Alanine--tRNA ligase.